We begin with the raw amino-acid sequence, 465 residues long: Light-independent protochlorophyllide reductase subunit N (465 aa).

[4Fe-4S] cluster contacts are provided by C23, C48, and C108.

It belongs to the BchN/ChlN family. In terms of assembly, protochlorophyllide reductase is composed of three subunits; ChlL, ChlN and ChlB. Forms a heterotetramer of two ChlB and two ChlN subunits. It depends on [4Fe-4S] cluster as a cofactor.

The enzyme catalyses chlorophyllide a + oxidized 2[4Fe-4S]-[ferredoxin] + 2 ADP + 2 phosphate = protochlorophyllide a + reduced 2[4Fe-4S]-[ferredoxin] + 2 ATP + 2 H2O. Its pathway is porphyrin-containing compound metabolism; chlorophyll biosynthesis (light-independent). Its function is as follows. Component of the dark-operative protochlorophyllide reductase (DPOR) that uses Mg-ATP and reduced ferredoxin to reduce ring D of protochlorophyllide (Pchlide) to form chlorophyllide a (Chlide). This reaction is light-independent. The NB-protein (ChlN-ChlB) is the catalytic component of the complex. This Trichodesmium erythraeum (strain IMS101) protein is Light-independent protochlorophyllide reductase subunit N.